Here is a 110-residue protein sequence, read N- to C-terminus: MFCTFFEKHHRKWDILLEKSTGVMEAMKVTSEEKEQLSTAIDRMNEGLDAFIQLYNESEIDEPLIQLDDDTAELMKQARDMYGQEKLNEKLNTIIKQILSISVSEEGEKE.

Topologically, residues 1-7 are cytoplasmic; it reads MFCTFFE. Residues 8–22 form a helical membrane-spanning segment; sequence KHHRKWDILLEKSTG. Residues 23 to 31 are Extracellular-facing; sequence VMEAMKVTS. Residues 32–55 traverse the membrane as a helical segment; that stretch reads EEKEQLSTAIDRMNEGLDAFIQLY. The Cytoplasmic portion of the chain corresponds to 56–66; it reads NESEIDEPLIQ. Residues 67-81 traverse the membrane as a helical segment; the sequence is LDDDTAELMKQARDM. Topologically, residues 82-88 are extracellular; it reads YGQEKLN. Residues 89 to 102 form a helical membrane-spanning segment; the sequence is EKLNTIIKQILSIS. Residues 103–110 are Cytoplasmic-facing; it reads VSEEGEKE.

Monomer.

It is found in the cell membrane. Chaperone that facilitates the production and integration of integral membrane proteins into the bacterial lipid bilayer. This Bacillus subtilis (strain 168) protein is Protein mistic (mstX).